The sequence spans 193 residues: Ribonuclease HII (193 aa).

An RNase H type-2 domain is found at 15-193; that stretch reads YIVAGVDEAG…SYHRKSFKFC (179 aa). The a divalent metal cation site is built by D21, E22, and D112.

Belongs to the RNase HII family. It depends on Mn(2+) as a cofactor. The cofactor is Mg(2+).

The protein localises to the cytoplasm. The catalysed reaction is Endonucleolytic cleavage to 5'-phosphomonoester.. Its function is as follows. Endonuclease that specifically degrades the RNA of RNA-DNA hybrids. The polypeptide is Ribonuclease HII (Rickettsia typhi (strain ATCC VR-144 / Wilmington)).